We begin with the raw amino-acid sequence, 226 residues long: ATP-dependent dethiobiotin synthetase BioD (226 aa).

Residue 12–17 participates in ATP binding; that stretch reads GVGKTV. Threonine 16 is a binding site for Mg(2+). Lysine 37 is an active-site residue. A substrate-binding site is contributed by threonine 41. Residues aspartate 49, 108-111, and 169-170 contribute to the ATP site; these read EGAG and GS. Positions 49 and 108 each coordinate Mg(2+).

The protein belongs to the dethiobiotin synthetase family. As to quaternary structure, homodimer. The cofactor is Mg(2+).

The protein localises to the cytoplasm. It catalyses the reaction (7R,8S)-7,8-diammoniononanoate + CO2 + ATP = (4R,5S)-dethiobiotin + ADP + phosphate + 3 H(+). It participates in cofactor biosynthesis; biotin biosynthesis; biotin from 7,8-diaminononanoate: step 1/2. Catalyzes a mechanistically unusual reaction, the ATP-dependent insertion of CO2 between the N7 and N8 nitrogen atoms of 7,8-diaminopelargonic acid (DAPA, also called 7,8-diammoniononanoate) to form a ureido ring. In Mycobacterium marinum (strain ATCC BAA-535 / M), this protein is ATP-dependent dethiobiotin synthetase BioD.